Reading from the N-terminus, the 360-residue chain is MLLSLFEFLSEYYRGFNVFQYLTLRAILGVLTALIIAFLVGPAMIRRLSLYKIGQQVRTDGPQTHLTKAGTPTMGGALILVAVAVSTLLWSDLSNRFVWVVLMVTLLFGLIGGIDDYRKLRYGNSKGLSARTKFFWQSVVGFATAILLYYTAQAPVETTFFVPLFKDVAIQLGPWFILLTWFVIVGASNAVNLTDGLDGLAIMPTVLVAGAFGVFAYLSGHAVFANYLGIPYVPGVGDLVVFTGALVGAGLGFLWFNAYPAQVFMGDVGALALGAALGVLAVVTRQEIVLVIMGGVFVVETLSVIMQVVSYKLTGRRIFRMAPLHHHFELKGWPEPRVIVRFWIITVILVLVGLATLKLR.

A run of 10 helical transmembrane segments spans residues 26–46 (AILGVLTALIIAFLVGPAMIR), 70–90 (GTPTMGGALILVAVAVSTLLW), 97–117 (FVWVVLMVTLLFGLIGGIDDY), 134–154 (FFWQSVVGFATAILLYYTAQA), 168–188 (VAIQLGPWFILLTWFVIVGAS), 199–219 (GLAIMPTVLVAGAFGVFAYLS), 236–256 (VGDLVVFTGALVGAGLGFLWF), 263–283 (VFMGDVGALALGAALGVLAVV), 288–308 (IVLVIMGGVFVVETLSVIMQV), and 338–358 (VIVRFWIITVILVLVGLATLK).

The protein belongs to the glycosyltransferase 4 family. MraY subfamily. The cofactor is Mg(2+).

The protein resides in the cell inner membrane. The enzyme catalyses UDP-N-acetyl-alpha-D-muramoyl-L-alanyl-gamma-D-glutamyl-meso-2,6-diaminopimeloyl-D-alanyl-D-alanine + di-trans,octa-cis-undecaprenyl phosphate = di-trans,octa-cis-undecaprenyl diphospho-N-acetyl-alpha-D-muramoyl-L-alanyl-D-glutamyl-meso-2,6-diaminopimeloyl-D-alanyl-D-alanine + UMP. The protein operates within cell wall biogenesis; peptidoglycan biosynthesis. In terms of biological role, catalyzes the initial step of the lipid cycle reactions in the biosynthesis of the cell wall peptidoglycan: transfers peptidoglycan precursor phospho-MurNAc-pentapeptide from UDP-MurNAc-pentapeptide onto the lipid carrier undecaprenyl phosphate, yielding undecaprenyl-pyrophosphoryl-MurNAc-pentapeptide, known as lipid I. The chain is Phospho-N-acetylmuramoyl-pentapeptide-transferase from Thioalkalivibrio sulfidiphilus (strain HL-EbGR7).